We begin with the raw amino-acid sequence, 206 residues long: Apoptosis regulator OPG045 (206 aa).

It belongs to the orthopoxvirus OPG045 family. In terms of assembly, homodimer. Interacts with host pro-apoptotic protein BCL2L11 (via BH3 domain). Interacts with host NLRP1. Interacts with host BAK.

It localises to the host mitochondrion outer membrane. The protein resides in the host cytoplasm. Plays a role in evading host innate immune response by inhibiting host inflammasome activation. Interacts with and inhibits NLR-mediated interleukin-1 beta/IL1B production in infected cells. At the host mitochondria outer membrane, interacts with the BH3 domain of host BAK and prevents BAK from binding active BAX. In turn, host apoptosis is inhibited. The protein is Apoptosis regulator OPG045 (OPG045) of Vaccinia virus (strain L-IVP) (VACV).